A 377-amino-acid chain; its full sequence is [2-(trimethylamino)ethyl]phosphonate dioxygenase (377 aa).

The tract at residues 95-119 (DTDQSSEVGRTSPDVETWDSSQPAP) is disordered. Asparagine 187 is a binding site for [2-(trimethylamino)ethyl]phosphonate. Histidine 198 serves as a coordination point for 2-oxoglutarate. The Fe(2+) site is built by histidine 198 and aspartate 200. Aspartate 200, asparagine 201, tyrosine 203, asparagine 286, and arginine 288 together coordinate [2-(trimethylamino)ethyl]phosphonate. The 2-oxoglutarate site is built by histidine 341, arginine 343, and arginine 352. Position 341 (histidine 341) interacts with Fe(2+).

The protein belongs to the gamma-BBH/TMLD family. In terms of assembly, homodimer. Fe(2+) is required as a cofactor. L-ascorbate serves as cofactor.

It carries out the reaction [2-(trimethylamino)ethyl]phosphonate + 2-oxoglutarate + O2 = [(1R)-1-hydroxy-2-(trimethylamino)ethyl]phosphonate + succinate + CO2. Involved in the degradation of the naturally occurring organophosphonate 2-(trimethylammonio)ethylphosphonate (TMAEP). Catalyzes the hydroxylation of TMAEP to (R)-1-hydroxy-2-(trimethylammonio)ethylphosphonate (OH-TMAEP). Is highly specific for its N-trimethylated substrate. Cannot use gamma-butyrobetaine as substrate. The polypeptide is [2-(trimethylamino)ethyl]phosphonate dioxygenase (Leisingera caerulea (Phaeobacter caeruleus)).